Reading from the N-terminus, the 217-residue chain is Orotate phosphoribosyltransferase (217 aa).

Lys-26 contacts 5-phospho-alpha-D-ribose 1-diphosphate. Residue 34 to 35 (FF) coordinates orotate. 5-phospho-alpha-D-ribose 1-diphosphate contacts are provided by residues 72–73 (YK), Arg-99, Lys-100, Lys-103, His-105, and 124–132 (DDVITAGTA). Residues Thr-128 and Arg-156 each contribute to the orotate site.

This sequence belongs to the purine/pyrimidine phosphoribosyltransferase family. PyrE subfamily. Homodimer. Requires Mg(2+) as cofactor.

It carries out the reaction orotidine 5'-phosphate + diphosphate = orotate + 5-phospho-alpha-D-ribose 1-diphosphate. It participates in pyrimidine metabolism; UMP biosynthesis via de novo pathway; UMP from orotate: step 1/2. Its function is as follows. Catalyzes the transfer of a ribosyl phosphate group from 5-phosphoribose 1-diphosphate to orotate, leading to the formation of orotidine monophosphate (OMP). The protein is Orotate phosphoribosyltransferase of Aeromonas salmonicida (strain A449).